The primary structure comprises 296 residues: Cytidine deaminase (296 aa).

CMP/dCMP-type deaminase domains are found at residues 52 to 167 (SPVE…YLPD) and 191 to 296 (QGHD…YISL). 93-95 (NQE) provides a ligand contact to substrate. Zn(2+) is bound at residue His-106. The Proton donor role is filled by Glu-108. Residues Cys-133 and Cys-136 each contribute to the Zn(2+) site.

Belongs to the cytidine and deoxycytidylate deaminase family. In terms of assembly, homodimer. Requires Zn(2+) as cofactor.

It catalyses the reaction cytidine + H2O + H(+) = uridine + NH4(+). It carries out the reaction 2'-deoxycytidine + H2O + H(+) = 2'-deoxyuridine + NH4(+). In terms of biological role, this enzyme scavenges exogenous and endogenous cytidine and 2'-deoxycytidine for UMP synthesis. In Mannheimia succiniciproducens (strain KCTC 0769BP / MBEL55E), this protein is Cytidine deaminase.